We begin with the raw amino-acid sequence, 287 residues long: Sulfofructosephosphate aldolase (287 aa).

Asp-82 acts as the Proton donor in catalysis. 2 residues coordinate Zn(2+): His-83 and His-180. Dihydroxyacetone phosphate is bound at residue Gly-181. His-208 contacts Zn(2+). Dihydroxyacetone phosphate-binding positions include 209–211 and 230–233; these read GGS and NVDT.

It belongs to the class II fructose-bisphosphate aldolase family. It depends on Zn(2+) as a cofactor.

The enzyme catalyses 6-deoxy-6-sulfo-D-fructose 1-phosphate = (2S)-3-sulfolactaldehyde + dihydroxyacetone phosphate. Its function is as follows. Part of the sulfo-EMP2 pathway, a D-sulfoquinovose degradation pathway that produces sulfolactate (SL). Cleaves 6-deoxy-6-sulfo-D-fructose 1-phosphate (SFP) to form dihydroxyacetone phosphate (DHAP) and 3-sulfolactaldehyde (SLA). The sequence is that of Sulfofructosephosphate aldolase from Alkalicoccus urumqiensis (Bacillus urumqiensis).